Reading from the N-terminus, the 245-residue chain is Leucyl/phenylalanyl-tRNA--protein transferase (245 aa).

The protein belongs to the L/F-transferase family.

It is found in the cytoplasm. The enzyme catalyses N-terminal L-lysyl-[protein] + L-leucyl-tRNA(Leu) = N-terminal L-leucyl-L-lysyl-[protein] + tRNA(Leu) + H(+). It catalyses the reaction N-terminal L-arginyl-[protein] + L-leucyl-tRNA(Leu) = N-terminal L-leucyl-L-arginyl-[protein] + tRNA(Leu) + H(+). The catalysed reaction is L-phenylalanyl-tRNA(Phe) + an N-terminal L-alpha-aminoacyl-[protein] = an N-terminal L-phenylalanyl-L-alpha-aminoacyl-[protein] + tRNA(Phe). Functions in the N-end rule pathway of protein degradation where it conjugates Leu, Phe and, less efficiently, Met from aminoacyl-tRNAs to the N-termini of proteins containing an N-terminal arginine or lysine. This Paraburkholderia phymatum (strain DSM 17167 / CIP 108236 / LMG 21445 / STM815) (Burkholderia phymatum) protein is Leucyl/phenylalanyl-tRNA--protein transferase.